We begin with the raw amino-acid sequence, 142 residues long: Hemoglobin subunit theta-1 (142 aa).

Residues alanine 2–arginine 142 enclose the Globin domain. Positions 59 and 88 each coordinate heme b.

The protein belongs to the globin family.

This is Hemoglobin subunit theta-1 (HBQ1) from Equus caballus (Horse).